Reading from the N-terminus, the 256-residue chain is Imidazole glycerol phosphate synthase subunit hisF1 (256 aa).

Residues aspartate 12 and aspartate 131 contribute to the active site.

It belongs to the HisA/HisF family. As to quaternary structure, heterodimer of HisH and HisF.

It is found in the cytoplasm. It carries out the reaction 5-[(5-phospho-1-deoxy-D-ribulos-1-ylimino)methylamino]-1-(5-phospho-beta-D-ribosyl)imidazole-4-carboxamide + L-glutamine = D-erythro-1-(imidazol-4-yl)glycerol 3-phosphate + 5-amino-1-(5-phospho-beta-D-ribosyl)imidazole-4-carboxamide + L-glutamate + H(+). The protein operates within amino-acid biosynthesis; L-histidine biosynthesis; L-histidine from 5-phospho-alpha-D-ribose 1-diphosphate: step 5/9. IGPS catalyzes the conversion of PRFAR and glutamine to IGP, AICAR and glutamate. The HisF subunit catalyzes the cyclization activity that produces IGP and AICAR from PRFAR using the ammonia provided by the HisH subunit. The polypeptide is Imidazole glycerol phosphate synthase subunit hisF1 (hisF1) (Pseudomonas aeruginosa (strain ATCC 15692 / DSM 22644 / CIP 104116 / JCM 14847 / LMG 12228 / 1C / PRS 101 / PAO1)).